Consider the following 439-residue polypeptide: Ornithine aminotransferase, mitochondrial (439 aa).

A mitochondrion-targeting transit peptide spans 1 to 35 (MLSKLASLQTVAALRRGLRTSVASATSVATKKTEQ). 2 positions are modified to N6-acetyllysine: lysine 49 and lysine 66. N6-succinyllysine is present on lysine 102. Lysine 107 carries the post-translational modification N6-acetyllysine; alternate. Lysine 107 carries the N6-succinyllysine; alternate modification. At lysine 292 the chain carries N6-(pyridoxal phosphate)lysine. Lysine 362 carries the post-translational modification N6-acetyllysine; alternate. Lysine 362 carries the N6-succinyllysine; alternate modification. Lysine 386 and lysine 392 each carry N6-acetyllysine. Lysine 405 carries the N6-acetyllysine; alternate modification. At lysine 405 the chain carries N6-succinyllysine; alternate. At lysine 421 the chain carries N6-acetyllysine.

In terms of assembly, homohexamer. The cofactor is pyridoxal 5'-phosphate. Expressed in the head and flagellum of epididymal sperm but not in testicular sperm (at protein level).

It is found in the mitochondrion matrix. The enzyme catalyses L-ornithine + 2-oxoglutarate = L-glutamate 5-semialdehyde + L-glutamate. It participates in amino-acid biosynthesis; L-proline biosynthesis; L-glutamate 5-semialdehyde from L-ornithine: step 1/1. Its function is as follows. Catalyzes the reversible interconversion of L-ornithine and 2-oxoglutarate to L-glutamate semialdehyde and L-glutamate. The protein is Ornithine aminotransferase, mitochondrial (Oat) of Rattus norvegicus (Rat).